Consider the following 273-residue polypeptide: Phycobilisome 32.1 kDa linker polypeptide, phycocyanin-associated, rod 2 (273 aa).

A PBS-linker domain is found at 1 to 180 (MTSLVSAQRL…VYRGYATSDR (180 aa)). Positions 220-273 (NQMYRLQVIQGAAPGRGTRVRRGKAEYLVSYDNLSAKLQQINRQGDTVTMISLA) constitute a CpcD-like domain.

Belongs to the phycobilisome linker protein family. Part of 2 PBS rod complexes, the conventional CpcG-PBS rod and a photosystem I-specific CpcL-PBS rod, both of which include ferredoxin--NADP reductase (petH). CpcG-PBS has on average 3 stacked phycocyanin hexamers (PC, CpcA and CpcB). Linker CpcG connects the PC stack to the thylakoid, the hexamers are linked by 1 copy of CpcC1, 1 copy of CpcC2 and the stack is terminated by a single copy of CpcD. The CpcL-PBS has on average 5 stacked phycocyanin hexamers (PC, CpcA and CpcB). Linker CpcL connects the PC stack to the thylakoid, the hexamers are linked by 1 copy of CpcC1, 3 copies of CpcC2 and the stack is terminated by a single copy of CpcD. Interacts with the C-phycocyanin (PC) beta subunit (cpcB), it may fit into the center of the PC hexamer.

It localises to the cellular thylakoid membrane. Functionally, rod linker protein, associated with phycocyanin. Linker polypeptides determine the state of aggregation and the location of the disk-shaped phycobiliprotein units within the phycobilisome and modulate their spectroscopic properties in order to mediate a directed and optimal energy transfer. This chain is Phycobilisome 32.1 kDa linker polypeptide, phycocyanin-associated, rod 2 (cpcC2), found in Synechocystis sp. (strain ATCC 27184 / PCC 6803 / Kazusa).